A 108-amino-acid chain; its full sequence is Anti-sigma-B factor antagonist (108 aa).

The region spanning 3 to 108 (LNIETTTQDK…MHVNEGTEVE (106 aa)) is the STAS domain. Position 57 is a phosphoserine (S57).

This sequence belongs to the anti-sigma-factor antagonist family. Phosphorylated by RsbW on a serine residue.

In terms of biological role, positive regulator of sigma-B activity. Non-phosphorylated RsbV binds to RsbW, preventing its association with sigma-B. When phosphorylated, releases RsbW, which is then free to complex with and inactivate sigma-B. The protein is Anti-sigma-B factor antagonist (rsbV) of Staphylococcus aureus (strain NCTC 8325 / PS 47).